The primary structure comprises 116 residues: Host transcription reprogramming factor 4 (116 aa).

Positions 1 to 24 (MHIIHISKFMALLAISTIAIPTRG) are cleaved as a signal peptide. Residues 24–53 (GRSEVDSRDVNQAQTVTSGSSIAPSGSEKR) are disordered. The segment covering 33-47 (VNQAQTVTSGSSIAP) has biased composition (polar residues). The C2H2-type; degenerate zinc finger occupies 74–96 (FQCPHCKDGISNRVALYTHVKAF).

The protein resides in the secreted. It is found in the host nucleus. Its function is as follows. Probable secreted effector that translocates into the nuclei of host cells to reprogram the expression of targeted genes by binding on effector binding elements in rice. The protein is Host transcription reprogramming factor 4 of Pyricularia oryzae (strain 70-15 / ATCC MYA-4617 / FGSC 8958) (Rice blast fungus).